We begin with the raw amino-acid sequence, 352 residues long: 4-hydroxy-2-oxovalerate aldolase (352 aa).

A Pyruvate carboxyltransferase domain is found at 14-266; that stretch reads VRMTDTSLRD…KTGIDFFDIA (253 aa). Residue 22–23 participates in substrate binding; sequence RD. A Mn(2+)-binding site is contributed by Asp-23. The active-site Proton acceptor is the His-26. Substrate-binding residues include Ser-176 and His-205. 2 residues coordinate Mn(2+): His-205 and His-207. Tyr-296 provides a ligand contact to substrate.

Belongs to the 4-hydroxy-2-oxovalerate aldolase family.

It catalyses the reaction (S)-4-hydroxy-2-oxopentanoate = acetaldehyde + pyruvate. The protein is 4-hydroxy-2-oxovalerate aldolase of Mycolicibacterium gilvum (strain PYR-GCK) (Mycobacterium gilvum (strain PYR-GCK)).